The sequence spans 158 residues: Disulfide bond formation protein B (158 aa).

Over 1–7 (MKNSRPV) the chain is Cytoplasmic. Residues 8-24 (LFAVALASLLLLAVALY) traverse the membrane as a helical segment. The Periplasmic segment spans residues 25-42 (LQHVENMLPCPLCVIQRY). Cysteines 34 and 37 form a disulfide. Residues 43–57 (AFAAIALICLVTAFR) traverse the membrane as a helical segment. The Cytoplasmic segment spans residues 58 to 63 (TEVTAR). Residues 64–81 (IGAALAALASLAGAGVAG) traverse the membrane as a helical segment. Residues 82–136 (WHIYIKAHPTVSCGIDPLETSLNTIPTAKLLPFLLQADGLCTTEYAPIMGLSIPQ) are Periplasmic-facing. Cys94 and Cys122 are oxidised to a cystine. A helical transmembrane segment spans residues 137–155 (WALVWFIVIALFLLHTAFR). Topologically, residues 156-158 (KKS) are cytoplasmic.

The protein belongs to the DsbB family.

The protein localises to the cell inner membrane. Required for disulfide bond formation in some periplasmic proteins. Acts by oxidizing the DsbA protein. The protein is Disulfide bond formation protein B of Herminiimonas arsenicoxydans.